The chain runs to 577 residues: Cell pattern formation-associated protein stuA (577 aa).

The tract at residues 1-41 (MNQPQPYMDQHAPAPPPASNMTQYSNYGAPQPLQPATHGYG) is disordered. A compositionally biased stretch (polar residues) spans 19–28 (SNMTQYSNYG). One can recognise an HTH APSES-type domain in the interval 111-217 (RVTATLWEDE…HNIGALLYHP (107 aa)). The H-T-H motif DNA-binding region spans 145 to 166 (GTKLLNVAGMTRGRRDGILKSE). Disordered regions lie at residues 228 to 487 (ATMA…QLPS) and 518 to 577 (QYPA…AVRR). Polar residues-rich tracts occupy residues 238-251 (SQEY…TQAP) and 319-333 (AVNS…SQGM). The span at 334–350 (PQYQTSQPPYTQSYSTP) shows a compositional bias: low complexity. Residues 351 to 364 (GSYSQPQYTHQQPG) are compositionally biased toward polar residues. Basic and acidic residues predominate over residues 390 to 399 (AENDHPDHKV). The segment covering 465–479 (TPRTTNPYTGYNNTP) has biased composition (low complexity). The tract at residues 526-552 (KRGREDDDQVDPYGRPSSALGEHKRQR) is nuclear localization domain.

It belongs to the EFG1/PHD1/stuA family.

It localises to the nucleus. Functionally, transcription factor that regulates asexual reproduction. Binds the StuA-response elements (StRE) with the consensus sequence 5'-(A/T)CGCG(T/A)N(A/C)-3' at the promoters of target genes. The protein is Cell pattern formation-associated protein stuA of Dothistroma septosporum (strain NZE10 / CBS 128990) (Red band needle blight fungus).